Consider the following 262-residue polypeptide: Small ribosomal subunit protein eS1 (262 aa).

The protein belongs to the eukaryotic ribosomal protein eS1 family. Component of the small ribosomal subunit. Mature ribosomes consist of a small (40S) and a large (60S) subunit. The 40S subunit contains about 33 different proteins and 1 molecule of RNA (18S). The 60S subunit contains about 49 different proteins and 3 molecules of RNA (25S, 5.8S and 5S).

It localises to the cytoplasm. The sequence is that of Small ribosomal subunit protein eS1 from Plasmodium vivax (strain Salvador I).